A 139-amino-acid polypeptide reads, in one-letter code: MLEEFKKFALRGNVVDLAVGVIIGAAFGAIVNSAVQDIFMPVIGAITGGLDFSNYYIPLSSKVQSGLPYVDAKKQGAVIGYGQFLTLTLNFAIVAFVLFLVIRAMNRLQLAETKKPDEVPADVKLLSEIRDILATKPRV.

Helical transmembrane passes span 14 to 34, 38 to 58, and 82 to 102; these read VVDLAVGVIIGAAFGAIVNSA, IFMPVIGAITGGLDFSNYYIP, and GQFLTLTLNFAIVAFVLFLVI.

It belongs to the MscL family. As to quaternary structure, homopentamer.

It localises to the cell inner membrane. Channel that opens in response to stretch forces in the membrane lipid bilayer. May participate in the regulation of osmotic pressure changes within the cell. This chain is Large-conductance mechanosensitive channel, found in Methylobacterium radiotolerans (strain ATCC 27329 / DSM 1819 / JCM 2831 / NBRC 15690 / NCIMB 10815 / 0-1).